Consider the following 268-residue polypeptide: Tubulin-specific chaperone C (268 aa).

Positions 98–255 constitute a C-CAP/cofactor C-like domain; sequence PAYTTTLKKH…SAFAFEDFDI (158 aa).

The protein resides in the cytoplasm. Its subcellular location is the cytoskeleton. Tubulin-folding protein; involved in the early step of the tubulin folding pathway. The polypeptide is Tubulin-specific chaperone C (CIN2) (Saccharomyces cerevisiae (strain ATCC 204508 / S288c) (Baker's yeast)).